We begin with the raw amino-acid sequence, 410 residues long: Lipoyl synthase, mitochondrial (410 aa).

Positions 125, 130, 136, 157, 161, 164, and 373 each coordinate [4Fe-4S] cluster. Positions 140–362 (SDEEGTATAT…EKEAMDMGFL (223 aa)) constitute a Radical SAM core domain.

The protein belongs to the radical SAM superfamily. Lipoyl synthase family. [4Fe-4S] cluster is required as a cofactor.

Its subcellular location is the mitochondrion. The enzyme catalyses [[Fe-S] cluster scaffold protein carrying a second [4Fe-4S](2+) cluster] + N(6)-octanoyl-L-lysyl-[protein] + 2 oxidized [2Fe-2S]-[ferredoxin] + 2 S-adenosyl-L-methionine + 4 H(+) = [[Fe-S] cluster scaffold protein] + N(6)-[(R)-dihydrolipoyl]-L-lysyl-[protein] + 4 Fe(3+) + 2 hydrogen sulfide + 2 5'-deoxyadenosine + 2 L-methionine + 2 reduced [2Fe-2S]-[ferredoxin]. It participates in protein modification; protein lipoylation via endogenous pathway; protein N(6)-(lipoyl)lysine from octanoyl-[acyl-carrier-protein]: step 2/2. In terms of biological role, catalyzes the radical-mediated insertion of two sulfur atoms into the C-6 and C-8 positions of the octanoyl moiety bound to the lipoyl domains of lipoate-dependent enzymes, thereby converting the octanoylated domains into lipoylated derivatives. This chain is Lipoyl synthase, mitochondrial, found in Leishmania major.